The primary structure comprises 256 residues: Ribosomal RNA small subunit methyltransferase A (256 aa).

Residues asparagine 12, leucine 14, glycine 39, glutamate 60, aspartate 85, and asparagine 103 each contribute to the S-adenosyl-L-methionine site.

The protein belongs to the class I-like SAM-binding methyltransferase superfamily. rRNA adenine N(6)-methyltransferase family. RsmA subfamily.

It is found in the cytoplasm. It carries out the reaction adenosine(1518)/adenosine(1519) in 16S rRNA + 4 S-adenosyl-L-methionine = N(6)-dimethyladenosine(1518)/N(6)-dimethyladenosine(1519) in 16S rRNA + 4 S-adenosyl-L-homocysteine + 4 H(+). Specifically dimethylates two adjacent adenosines (A1518 and A1519) in the loop of a conserved hairpin near the 3'-end of 16S rRNA in the 30S particle. May play a critical role in biogenesis of 30S subunits. The chain is Ribosomal RNA small subunit methyltransferase A from Legionella pneumophila subsp. pneumophila (strain Philadelphia 1 / ATCC 33152 / DSM 7513).